The primary structure comprises 380 residues: MKKSIGILSPGVALGMAGSAMSSKFFLVALAIFFSFAQVVIEANSWWSLGMNNPVQMSEVYIIGAQPLCSQLAGLSQGQKKLCHLYQDHMQYIGEGAKTGIKECQYQFRHRRWNCSTVDNTSVFGRVMQIGSRETAFTYAVSAAGVVNAMSRACREGELSTCGCSRAARPKDLPRDWLWGGCGDNIDYGYRFAKEFVDARERERIHAKGSYESARILMNLHNNEAGRRTVYNLADVACKCHGVSGSCSLKTCWLQLADFRKVGDALKEKYDSAAAMRLNSRGKLVQVNSRFNSPTTQDLVYIDPSPDYCVRNESTGSLGTQGRLCNKTSEGMDGCELMCCGRGYDQFKTVQTERCHCKFHWCCYVKCKKCTEIVDQFVCK.

Positions 1 to 35 are cleaved as a signal peptide; it reads MKKSIGILSPGVALGMAGSAMSSKFFLVALAIFFS. The propeptide occupies 36-61; it reads FAQVVIEANSWWSLGMNNPVQMSEVY. The cysteines at positions 104 and 115 are disulfide-linked. Asn114 and Asn120 each carry an N-linked (GlcNAc...) asparagine glycan. Disulfide bonds link Cys154–Cys162, Cys164–Cys182, Cys238–Cys252, Cys240–Cys247, Cys309–Cys340, Cys325–Cys335, Cys339–Cys379, Cys355–Cys370, Cys357–Cys367, and Cys362–Cys363. Ser244 is lipidated: O-palmitoleoyl serine; by PORCN. N-linked (GlcNAc...) asparagine glycosylation is found at Asn312 and Asn326.

It belongs to the Wnt family. In terms of assembly, forms a soluble 1:1 complex with AFM; this prevents oligomerization and is required for prolonged biological activity. The complex with AFM may represent the physiological form in body fluids. Homooligomer; disulfide-linked, leading to inactivation (in vitro). Interacts with PORCN. Interacts with WLS. Interacts with glypican GCP3. Interacts with PKD1 (via extracellular domain). Interacts with TMEM67. Post-translationally, glycosylation is necessary for secretion but not for activity. Palmitoleoylation is required for efficient binding to frizzled receptors. Depalmitoleoylation leads to Wnt signaling pathway inhibition. In terms of processing, proteolytic processing by TIKI1 and TIKI2 promotes oxidation and formation of large disulfide-bond oligomers, leading to inactivation of WNT5A. Expression is increased in differentiated thyroid carcinomas compared to normal thyroid tissue and anaplastic thyroid tumors where expression is low or undetectable. Expression is found in thyrocytes but not in stromal cells (at protein level). Detected in neonate heart and lung.

The protein resides in the secreted. The protein localises to the extracellular space. It localises to the extracellular matrix. In terms of biological role, ligand for members of the frizzled family of seven transmembrane receptors. Can activate or inhibit canonical Wnt signaling, depending on receptor context. In the presence of FZD4, activates beta-catenin signaling. In the presence of ROR2, inhibits the canonical Wnt pathway by promoting beta-catenin degradation through a GSK3-independent pathway which involves down-regulation of beta-catenin-induced reporter gene expression. Suppression of the canonical pathway allows chondrogenesis to occur and inhibits tumor formation. Stimulates cell migration. Decreases proliferation, migration, invasiveness and clonogenicity of carcinoma cells and may act as a tumor suppressor. Mediates motility of melanoma cells. Required during embryogenesis for extension of the primary anterior-posterior axis and for outgrowth of limbs and the genital tubercle. Inhibits type II collagen expression in chondrocytes. The polypeptide is Protein Wnt-5a (WNT5A) (Homo sapiens (Human)).